The following is a 108-amino-acid chain: BH3-like motif-containing cell death inducer (108 aa).

The BH3-like motif lies at 5 to 12 (LPIEGQEI).

In terms of tissue distribution, ubiquitously expressed.

It is found in the cytoplasm. The protein localises to the mitochondrion. Functions as a proapoptotic molecule through the caspase-dependent mitochondrial pathway of cell death. The sequence is that of BH3-like motif-containing cell death inducer (BLID) from Homo sapiens (Human).